We begin with the raw amino-acid sequence, 111 residues long: Nucleoid-associated protein Cpar_0834 (111 aa).

The protein belongs to the YbaB/EbfC family. In terms of assembly, homodimer.

It is found in the cytoplasm. Its subcellular location is the nucleoid. Functionally, binds to DNA and alters its conformation. May be involved in regulation of gene expression, nucleoid organization and DNA protection. This Chlorobaculum parvum (strain DSM 263 / NCIMB 8327) (Chlorobium vibrioforme subsp. thiosulfatophilum) protein is Nucleoid-associated protein Cpar_0834.